Reading from the N-terminus, the 445-residue chain is Histamine H3 receptor (445 aa).

At 1–39 (MERAPPDGPLNASGALAGEAAAAGGARGFSAAWTAVLAA) the chain is on the extracellular side. The N-linked (GlcNAc...) asparagine glycan is linked to Asn-11. Residues 40–60 (LMALLIVATVLGNALVMLAFV) traverse the membrane as a helical segment. Residues 61–70 (ADSSLRTQNN) are Cytoplasmic-facing. The helical transmembrane segment at 71-91 (FFLLNLAISDFLVGAFCIPLY) threads the bilayer. At 92-108 (VPYVLTGRWTFGRGLCK) the chain is on the extracellular side. Cysteines 107 and 188 form a disulfide. The chain crosses the membrane as a helical span at residues 109 to 129 (LWLVVDYLLCTSSAFNIVLIS). Over 130–156 (YDRFLSVTRAVSYRAQQGDTRRAVRKM) the chain is Cytoplasmic. Residues 157 to 177 (LLVWVLAFLLYGPAILSWEYL) form a helical membrane-spanning segment. Over 178–196 (SGGSSIPEGHCYAEFFYNW) the chain is Extracellular. A helical membrane pass occupies residues 197-217 (YFLITASTLEFFTPFLSVTFF). The Cytoplasmic segment spans residues 218–359 (NLSIYLNIQR…LSRDRKVAKS (142 aa)). Disordered regions lie at residues 237 to 260 (REAAGPEPPPEAQPSPPPPPGCWG) and 288 to 336 (EATL…LEKR). Pro residues predominate over residues 242–257 (PEPPPEAQPSPPPPPG). Residues 290–299 (TLGGGGGGGS) show a composition bias toward gly residues. The span at 300–312 (VASPTSSSGSSSR) shows a compositional bias: low complexity. A helical membrane pass occupies residues 360–380 (LAVIVSIFGLCWAPYTLLMII). At 381-395 (RAACHGHCVPDYWYE) the chain is on the extracellular side. A helical transmembrane segment spans residues 396-416 (TSFWLLWANSAVNPVLYPLCH). Over 417 to 445 (HSFRRAFTKLLCPQKLKIQPHSSLEHCWK) the chain is Cytoplasmic. Position 439 is a phosphoserine (Ser-439).

The protein belongs to the G-protein coupled receptor 1 family. Expressed predominantly in the CNS, with the greatest expression in the thalamus and caudate nucleus. The various isoforms are mainly coexpressed in brain, but their relative expression level varies in a region-specific manner. Isoform 3 and isoform 7 are highly expressed in the thalamus, caudate nucleus and cerebellum while isoform 5 and isoform 6 show a poor expression. Isoform 5 and isoform 6 show a high expression in the amygdala, substantia nigra, cerebral cortex and hypothalamus. Isoform 7 is not found in hypothalamus or substantia nigra.

The protein resides in the cell membrane. In terms of biological role, the H3 subclass of histamine receptors could mediate the histamine signals in CNS and peripheral nervous system. Signals through the inhibition of adenylate cyclase and displays high constitutive activity (spontaneous activity in the absence of agonist). Agonist stimulation of isoform 3 neither modified adenylate cyclase activity nor induced intracellular calcium mobilization. The polypeptide is Histamine H3 receptor (HRH3) (Homo sapiens (Human)).